The following is a 556-amino-acid chain: Formate--tetrahydrofolate ligase (556 aa).

65-72 (TPAGEGKT) serves as a coordination point for ATP.

The protein belongs to the formate--tetrahydrofolate ligase family.

It carries out the reaction (6S)-5,6,7,8-tetrahydrofolate + formate + ATP = (6R)-10-formyltetrahydrofolate + ADP + phosphate. The protein operates within one-carbon metabolism; tetrahydrofolate interconversion. This chain is Formate--tetrahydrofolate ligase, found in Carboxydothermus hydrogenoformans (strain ATCC BAA-161 / DSM 6008 / Z-2901).